The sequence spans 96 residues: uncharacterized protein (96 aa).

Helical transmembrane passes span 14–34, 38–58, and 67–87; these read FIEG…KYWA, LAVT…LLVL, and WPLK…GNFL.

It is found in the cell membrane. This is an uncharacterized protein from Bacillus subtilis (strain 168).